A 63-amino-acid chain; its full sequence is Large ribosomal subunit protein uL30 (63 aa).

This sequence belongs to the universal ribosomal protein uL30 family. As to quaternary structure, part of the 50S ribosomal subunit.

This Rickettsia peacockii (strain Rustic) protein is Large ribosomal subunit protein uL30.